A 630-amino-acid chain; its full sequence is 1-deoxy-D-xylulose-5-phosphate synthase (630 aa).

Thiamine diphosphate is bound by residues histidine 72 and 113–115 (GHS). Mg(2+) is bound at residue aspartate 144. Thiamine diphosphate-binding positions include 145 to 146 (GA), asparagine 173, tyrosine 284, and glutamate 367. Residue asparagine 173 coordinates Mg(2+).

Belongs to the transketolase family. DXPS subfamily. Homodimer. It depends on Mg(2+) as a cofactor. Thiamine diphosphate is required as a cofactor.

The enzyme catalyses D-glyceraldehyde 3-phosphate + pyruvate + H(+) = 1-deoxy-D-xylulose 5-phosphate + CO2. It functions in the pathway metabolic intermediate biosynthesis; 1-deoxy-D-xylulose 5-phosphate biosynthesis; 1-deoxy-D-xylulose 5-phosphate from D-glyceraldehyde 3-phosphate and pyruvate: step 1/1. Functionally, catalyzes the acyloin condensation reaction between C atoms 2 and 3 of pyruvate and glyceraldehyde 3-phosphate to yield 1-deoxy-D-xylulose-5-phosphate (DXP). This is 1-deoxy-D-xylulose-5-phosphate synthase from Geobacillus sp. (strain WCH70).